Reading from the N-terminus, the 192-residue chain is Phosphoheptose isomerase (192 aa).

In terms of domain architecture, SIS spans 37–192 (LADSFKAGGK…IQLIEKEMVK (156 aa)). 52–54 (NGG) lines the substrate pocket. His-61 and Glu-65 together coordinate Zn(2+). Substrate contacts are provided by residues Glu-65, 93–94 (ND), 119–121 (STS), Ser-124, and Gln-172. Positions 172 and 180 each coordinate Zn(2+).

Belongs to the SIS family. GmhA subfamily. In terms of assembly, homotetramer. Zn(2+) is required as a cofactor.

Its subcellular location is the cytoplasm. The enzyme catalyses 2 D-sedoheptulose 7-phosphate = D-glycero-alpha-D-manno-heptose 7-phosphate + D-glycero-beta-D-manno-heptose 7-phosphate. Its pathway is carbohydrate biosynthesis; D-glycero-D-manno-heptose 7-phosphate biosynthesis; D-glycero-alpha-D-manno-heptose 7-phosphate and D-glycero-beta-D-manno-heptose 7-phosphate from sedoheptulose 7-phosphate: step 1/1. In terms of biological role, catalyzes the isomerization of sedoheptulose 7-phosphate in D-glycero-D-manno-heptose 7-phosphate. The protein is Phosphoheptose isomerase of Salmonella dublin (strain CT_02021853).